A 388-amino-acid polypeptide reads, in one-letter code: GDP-4-keto-6-deoxy-D-mannose 3-dehydratase (388 aa).

26 to 29 (KMFT) provides a ligand contact to GDP-4-dehydro-alpha-D-rhamnose. A helical transmembrane segment spans residues 49–69 (YAVMVSSGSTANLLMIAALFF). Residues 56–57 (GS), Trp88, Glu162, and Ser183 each bind pyridoxal 5'-phosphate. The Proton donor/acceptor role is filled by His188. His215 lines the L-glutamate pocket. Arg219 serves as a coordination point for GDP-4-dehydro-alpha-D-rhamnose. Asn248 provides a ligand contact to pyridoxal 5'-phosphate. Arg250 contributes to the L-glutamate binding site. Glu329 provides a ligand contact to GDP-4-dehydro-alpha-D-rhamnose.

Belongs to the DegT/DnrJ/EryC1 family. As to quaternary structure, homodimer. Requires pyridoxal 5'-phosphate as cofactor.

Its subcellular location is the cell membrane. The enzyme catalyses GDP-4-dehydro-alpha-D-rhamnose + L-glutamate = GDP-4-dehydro-3,6-dideoxy-alpha-D-mannose + 2-oxoglutarate + NH4(+). It participates in nucleotide-sugar metabolism; GDP-L-colitose biosynthesis. Its function is as follows. Involved in the biosynthesis of L-colitose, a 3,6-dideoxyhexose present in the O-antigen region of lipopolysaccharides (LPS), where it serves as an antigenic determinant and is vital for bacterial defense and survival. Catalyzes the removal of the C3'-hydroxyl group from GDP-4-keto-6-deoxy-D-mannose via a combined transamination-deoxygenation reaction. The catalysis is initiated by a transamination step in which pyridoxal 5'-phosphate (PLP) is converted to pyridoxamine 5'-phosphate (PMP) in the presence of L-glutamate. This coenzyme then forms a Schiff base with GDP-4-keto-6-deoxy-D-mannose and the resulting adduct undergoes a PMP-mediated beta-dehydration reaction to give a sugar enamine intermediate, which after tautomerization and hydrolysis to release ammonia yields GDP-4-keto-3,6-dideoxy-D-mannose as a product. In vitro, is able to catalyze the formation of GDP-4-keto-3,6-dideoxymannose using GDP-perosamine rather than GDP-4-keto-6-deoxymannose as a substrate, with no need of glutamate. The sequence is that of GDP-4-keto-6-deoxy-D-mannose 3-dehydratase from Escherichia coli O55:H7 (strain CB9615 / EPEC).